The chain runs to 239 residues: MSLYRDEGVVLRTSKLGEADRIITILTRGHGKIRAVAKGVRRTKSRFGARLEPFMRVDVLIAEGRSLDVVSQAEAVAAYGAPIAADYAAYEAANVIVETIDKIASTEHEQLPNQYRLLIGALNALAKQSHAPQAIGDSYVMRALALAGWTPRLGTCVVCGKAEPAYLSIASGGVMCEADHTTDARRIAPFVLNQFDALIRGDWSVLDAAPVERVVQELVEDWGEYYLERPIRSLRLIDS.

Belongs to the RecO family.

Its function is as follows. Involved in DNA repair and RecF pathway recombination. In Bifidobacterium longum (strain DJO10A), this protein is DNA repair protein RecO.